Reading from the N-terminus, the 462-residue chain is tRNA(Ile2) 2-agmatinylcytidine synthetase TiaS (462 aa).

The protein belongs to the TiaS family.

Its subcellular location is the cytoplasm. The enzyme catalyses cytidine(34) in tRNA(Ile2) + agmatine + ATP + H2O = 2-agmatinylcytidine(34) in tRNA(Ile2) + AMP + 2 phosphate + 2 H(+). Functionally, ATP-dependent agmatine transferase that catalyzes the formation of 2-agmatinylcytidine (agm2C) at the wobble position (C34) of tRNA(Ile2), converting the codon specificity from AUG to AUA. The polypeptide is tRNA(Ile2) 2-agmatinylcytidine synthetase TiaS (Haloquadratum walsbyi (strain DSM 16790 / HBSQ001)).